Reading from the N-terminus, the 475-residue chain is Equilibrative nucleoside transporter 3 (475 aa).

The Cytoplasmic portion of the chain corresponds to 1–51 (MAFASEDIAYHSSNAVYRVPSNRHEADQEALLGKPLDYPAPGLQRPEDRFN). A Phosphoserine modification is found at Ser21. A Dileucine internalization motif motif is present at residues 31–32 (LL). A helical transmembrane segment spans residues 52–72 (GAYIIFFCLGIGGLLPWNFFV). Residues 73–105 (TAKEYWAFKLRNCSSPASGKDPEDADILNYFES) lie on the Extracellular side of the membrane. A glycan (N-linked (GlcNAc...) asparagine) is linked at Asn84. A helical membrane pass occupies residues 106–126 (YLAVASTVPSLLFLVANFLLV). The Cytoplasmic portion of the chain corresponds to 127–132 (NRIRVH). A helical membrane pass occupies residues 133–153 (VRVLASLSVSLAIFVVMAVLV). Topologically, residues 154–162 (RVDTSSWTR) are extracellular. A helical transmembrane segment spans residues 163-183 (GFFSIAMACMAIISSSSTIFN). The Cytoplasmic segment spans residues 184-199 (SSVYGLTGSFPMRNAQ). The helical transmembrane segment at 200–220 (ALISGGAMGGTVSAVASLVDL) threads the bilayer. Residues 221–230 (AASSDVRDSA) are Extracellular-facing. Residues 231-251 (LAFFLTAAVFLGLCVGLYLLL) traverse the membrane as a helical segment. Residues 252–305 (PQLEYARYYMRPVVPIHVFSSEDSPPRDAPSTSSVAPASRAVHTPPLGPILKKT) lie on the Cytoplasmic side of the membrane. A disordered region spans residues 272-291 (SEDSPPRDAPSTSSVAPASR). A helical membrane pass occupies residues 306–326 (AGLGFCAVFLYFITALIFPAI). Over 327-340 (STNIQPMHKGTGSP) the chain is Extracellular. A helical transmembrane segment spans residues 341-361 (WTSKFYVPLTVFLLFNFADLC). Over 362 to 377 (GRQVTAWIQVPGPRSK) the chain is Cytoplasmic. A helical membrane pass occupies residues 378-398 (LLPILAVSRVCLVPLFLLCNY). Residues 399–414 (QPRSHLTLVLFQSDIY) are Extracellular-facing. Residues 415–437 (PILFTCLLGLSNGYLSTLVLMYG) form a helical membrane-spanning segment. The Cytoplasmic portion of the chain corresponds to 438–450 (PKIVPRELAEATS). A helical transmembrane segment spans residues 451-471 (VVMLFYMSLGLMLGSACAALL). Topologically, residues 472 to 475 (EHFI) are extracellular.

This sequence belongs to the SLC29A/ENT transporter (TC 2.A.57) family. As to expression, widely expressed. Highest levels in heart and liver (at protein level).

Its subcellular location is the lysosome membrane. It localises to the late endosome membrane. It is found in the mitochondrion membrane. The protein localises to the cell membrane. It carries out the reaction adenosine(in) = adenosine(out). The catalysed reaction is guanosine(in) = guanosine(out). It catalyses the reaction inosine(in) = inosine(out). The enzyme catalyses uridine(out) = uridine(in). It carries out the reaction cytidine(in) = cytidine(out). The catalysed reaction is thymidine(in) = thymidine(out). It catalyses the reaction 2'-deoxyadenosine(in) = 2'-deoxyadenosine(out). The enzyme catalyses 2'-deoxycytidine(in) = 2'-deoxycytidine(out). It carries out the reaction guanine(out) = guanine(in). The catalysed reaction is uracil(in) = uracil(out). It catalyses the reaction (R)-noradrenaline(out) = (R)-noradrenaline(in). The enzyme catalyses dopamine(out) = dopamine(in). It carries out the reaction serotonin(out) = serotonin(in). The catalysed reaction is tyramine(in) = tyramine(out). It catalyses the reaction ATP(in) = ATP(out). In terms of biological role, uniporter that mediates the facilitative transport of nucleoside across lysosomal and mitochondrial membranes. Functions as a non-electrogenic Na(+)-independent transporter. Substrate transport is pH-dependent and enhanced under acidic condition, probably reflecting the location of the transporter in acidic intracellular compartments. Proton is not a cotransporting ion but most likely change the ionization state of the transporter which dictates transport-permissible/impermissible conformation for nucleoside translocation. May direct the nucleoside transport from lysosomes to cytosol or cytosol to mitochondria to facilitate the fundamental function of salvage synthesis of nucleic acids. Involved in the transport of nucleosides (adenosine, guanosine, uridine, thymidine, cytidine and inosine) and deoxynucleosides (deoxyadenosine, deoxycytidine). Also mediates transport of purine nucleobases (adenine, guanine) and pyrimidine nucleobases (uracil). Also able to transport monoamine neurotransmitters dopamine, serotonin, noradrenaline and tyramine. Capable of transporting ATP. Mediates nucleoside export from lysosomes in macrophages, which regulates macrophage functions and numbers. The protein is Equilibrative nucleoside transporter 3 of Rattus norvegicus (Rat).